The chain runs to 255 residues: 7alpha-hydroxysteroid dehydrogenase (255 aa).

NAD(+) is bound by residues Ile-23, Asp-42–Ile-43, Asp-68–Ile-69, and Asn-95. Residues Gly-99, Ser-146, Asn-151, and Tyr-159 each coordinate glycochenodeoxycholate. Residues Tyr-159, Lys-163, and Ile-192–Thr-194 contribute to the NAD(+) site. The active-site Proton acceptor is the Tyr-159.

It belongs to the short-chain dehydrogenases/reductases (SDR) family. As to quaternary structure, homotetramer.

It carries out the reaction cholate + NAD(+) = 3alpha,12alpha-dihydroxy-7-oxo-5beta-cholanate + NADH + H(+). The catalysed reaction is chenodeoxycholate + NAD(+) = 7-oxolithocholate + NADH + H(+). The enzyme catalyses taurochenodeoxycholate + NAD(+) = 7-oxotaurolithocholate + NADH + H(+). It catalyses the reaction taurocholate + NAD(+) = 7-oxo-taurodeoxycholate + NADH + H(+). It carries out the reaction glycocholate + NAD(+) = 7-oxo-glycodeoxycholate + NADH + H(+). The catalysed reaction is glycochenodeoxycholate + NAD(+) = 7-oxoglycolithocholate + NADH + H(+). In terms of biological role, 7alpha-hydroxysteroid dehydrogenase involved in the metabolism of bile acids. Catalyzes the NAD(+)-dependent oxidation of the 7alpha-hydroxy group of 7alpha-hydroxysteroids, such as the major human bile acids cholate and chenodeoxycholate, to the corresponding 7-oxosteroids. To a lesser extent, can also act on taurochenodeoxycholate, taurocholate and glycocholate. Can also use glycochenodeoxycholate as substrate. Is not able to use NADP(+) instead of NAD(+) as the electron acceptor. This chain is 7alpha-hydroxysteroid dehydrogenase (hdhA), found in Escherichia coli O157:H7.